Consider the following 430-residue polypeptide: Tol-Pal system protein TolB (430 aa).

An N-terminal signal peptide occupies residues 1 to 21 (MKQALRVAFGFLILWASVLHA).

Belongs to the TolB family. The Tol-Pal system is composed of five core proteins: the inner membrane proteins TolA, TolQ and TolR, the periplasmic protein TolB and the outer membrane protein Pal. They form a network linking the inner and outer membranes and the peptidoglycan layer.

Its subcellular location is the periplasm. In terms of biological role, part of the Tol-Pal system, which plays a role in outer membrane invagination during cell division and is important for maintaining outer membrane integrity. TolB occupies a key intermediary position in the Tol-Pal system because it communicates directly with both membrane-embedded components, Pal in the outer membrane and TolA in the inner membrane. This chain is Tol-Pal system protein TolB, found in Shigella flexneri.